The following is a 166-amino-acid chain: Interferon gamma (166 aa).

An N-terminal signal peptide occupies residues 1-23 (MNYTSYILAFQLCVILGSSGCYC). Glutamine 24 bears the Pyrrolidone carboxylic acid mark. N-linked (GlcNAc...) asparagine glycosylation is found at asparagine 39 and asparagine 106.

This sequence belongs to the type II (or gamma) interferon family. As to quaternary structure, homodimer. Interacts with IFNGR1 (via extracellular domain); this interaction promotes IFNGR1 dimerization. In terms of tissue distribution, released primarily from activated T lymphocytes.

It is found in the secreted. Its function is as follows. Type II interferon produced by immune cells such as T-cells and NK cells that plays crucial roles in antimicrobial, antiviral, and antitumor responses by activating effector immune cells and enhancing antigen presentation. Primarily signals through the JAK-STAT pathway after interaction with its receptor IFNGR1 to affect gene regulation. Upon IFNG binding, IFNGR1 intracellular domain opens out to allow association of downstream signaling components JAK2, JAK1 and STAT1, leading to STAT1 activation, nuclear translocation and transcription of IFNG-regulated genes. Many of the induced genes are transcription factors such as IRF1 that are able to further drive regulation of a next wave of transcription. Plays a role in class I antigen presentation pathway by inducing a replacement of catalytic proteasome subunits with immunoproteasome subunits. In turn, increases the quantity, quality, and repertoire of peptides for class I MHC loading. Increases the efficiency of peptide generation also by inducing the expression of activator PA28 that associates with the proteasome and alters its proteolytic cleavage preference. Up-regulates as well MHC II complexes on the cell surface by promoting expression of several key molecules such as cathepsins B/CTSB, H/CTSH, and L/CTSL. Participates in the regulation of hematopoietic stem cells during development and under homeostatic conditions by affecting their development, quiescence, and differentiation. The protein is Interferon gamma (IFNG) of Camelus bactrianus (Bactrian camel).